The chain runs to 326 residues: 4-hydroxythreonine-4-phosphate dehydrogenase (326 aa).

Residues His132 and Thr133 each coordinate substrate. A divalent metal cation-binding residues include His162, His207, and His262. Residues Lys270, Asn279, and Arg288 each contribute to the substrate site.

This sequence belongs to the PdxA family. In terms of assembly, homodimer. It depends on Zn(2+) as a cofactor. The cofactor is Mg(2+). Co(2+) serves as cofactor.

It localises to the cytoplasm. It carries out the reaction 4-(phosphooxy)-L-threonine + NAD(+) = 3-amino-2-oxopropyl phosphate + CO2 + NADH. The protein operates within cofactor biosynthesis; pyridoxine 5'-phosphate biosynthesis; pyridoxine 5'-phosphate from D-erythrose 4-phosphate: step 4/5. Its function is as follows. Catalyzes the NAD(P)-dependent oxidation of 4-(phosphooxy)-L-threonine (HTP) into 2-amino-3-oxo-4-(phosphooxy)butyric acid which spontaneously decarboxylates to form 3-amino-2-oxopropyl phosphate (AHAP). The sequence is that of 4-hydroxythreonine-4-phosphate dehydrogenase from Ruegeria sp. (strain TM1040) (Silicibacter sp.).